Consider the following 361-residue polypeptide: Mannose-1-phosphate guanylyltransferase 1 (361 aa).

Positions 6 and 7 each coordinate GDP-alpha-D-mannose. Residues Gly9, Gly11, Thr12, Arg13, and Lys23 each coordinate diphosphate. Gly85, Asn109, Asp111, Gly146, and Asn173 together coordinate GDP-alpha-D-mannose.

Belongs to the transferase hexapeptide repeat family. As to quaternary structure, interacts in vitro with CSN5A and CSN5B, but in planta only with CSN5B, which targets CYT1 for degradation in the dark by the 26S proteasome. Forms homodimers in the unliganded structure. The product-bound structure is composed of six dimers that form a dodecameric assembly.

It is found in the cytoplasm. The protein localises to the nucleus. The enzyme catalyses alpha-D-mannose 1-phosphate + GTP + H(+) = GDP-alpha-D-mannose + diphosphate. It functions in the pathway nucleotide-sugar biosynthesis; GDP-alpha-D-mannose biosynthesis; GDP-alpha-D-mannose from alpha-D-mannose 1-phosphate (GTP route): step 1/1. Functionally, essential protein during embryogenesis. Catalyzes a reaction of the Smirnoff-Wheeler pathway, the major route to ascorbate biosynthesis in plants. Plays an essential role in plant growth and development and cell-wall architecture. Provides GDP-mannose, used for cell wall carbohydrate biosynthesis, protein N-glycosylation, as well as for the biosynthesis of the antioxidant ascorbate. This chain is Mannose-1-phosphate guanylyltransferase 1, found in Arabidopsis thaliana (Mouse-ear cress).